The chain runs to 169 residues: Putative antitoxin Rv0268c (169 aa).

Residues 1 to 11 (MGTRSKSRTRQ) are compositionally biased toward basic residues. The disordered stretch occupies residues 1 to 35 (MGTRSKSRTRQLKQSNGCTATTSGASDRRRRARRR). Residues 120–153 (AAILISAERYESLMEELEDLRDRLSVHEREHVTM) are a coiled coil.

This sequence belongs to the phD/YefM antitoxin family.

Its function is as follows. Putative antitoxin component of a type II toxin-antitoxin (TA) system; however the expected toxin coding sequence is not found adjacent to this gene. In Mycobacterium tuberculosis (strain ATCC 25618 / H37Rv), this protein is Putative antitoxin Rv0268c.